The chain runs to 540 residues: Decreased expression in renal and prostate cancer protein (540 aa).

The segment covering 1-12 (MKEPRIFPRERP) has biased composition (basic and acidic residues). Disordered regions lie at residues 1-264 (MKEP…DARA) and 304-389 (SQAS…AFSQ). Low complexity-rich tracts occupy residues 113 to 125 (PRPG…SPGS) and 180 to 192 (GPSL…LTPG). The span at 304-316 (SQASGNMGTSPSS) shows a compositional bias: polar residues. Residue S313 is modified to Phosphoserine. The span at 321–330 (PGPIGPNSGP) shows a compositional bias: low complexity. R375 is subject to Asymmetric dimethylarginine. Residue R403 is modified to Omega-N-methylarginine. Position 439 is a phosphoserine (S439). The disordered stretch occupies residues 516-540 (GTNPAAFPRPGGPMAAMYPNGMLPP).

This sequence belongs to the DERPC family.

The protein resides in the nucleus. In terms of biological role, potential tumor suppressor. In Bos taurus (Bovine), this protein is Decreased expression in renal and prostate cancer protein.